Reading from the N-terminus, the 308-residue chain is Oligopeptide transport system permease protein AmiD (308 aa).

6 helical membrane passes run 43 to 63 (TVVMLGILVAIILISFIYPMF), 111 to 131 (ILISVIATVINLVIGVFVGGI), 145 to 167 (VYNVISNIPPLLIVIVLTYSIGA), 171 to 193 (NLIFAMSVTTWIGIAFMIRVQIL), 234 to 254 (MLPSFISYEAFLSFFGLGLPI), and 274 to 294 (AYLFWIPLTTLVLVSLSLFVV). The 189-residue stretch at 107 to 295 (ARNSILISVI…LVSLSLFVVG (189 aa)) folds into the ABC transmembrane type-1 domain.

Belongs to the binding-protein-dependent transport system permease family. OppBC subfamily.

Its subcellular location is the cell membrane. Its function is as follows. Part of the binding-protein-dependent transport system for oligopeptides; probably responsible for the translocation of the substrate across the membrane. The polypeptide is Oligopeptide transport system permease protein AmiD (amiD) (Streptococcus pneumoniae (strain ATCC BAA-255 / R6)).